Consider the following 906-residue polypeptide: DNA mismatch repair protein MutS (906 aa).

An ATP-binding site is contributed by 656-663; the sequence is GPNMAGKS.

This sequence belongs to the DNA mismatch repair MutS family.

This protein is involved in the repair of mismatches in DNA. It is possible that it carries out the mismatch recognition step. This protein has a weak ATPase activity. This Rhodopseudomonas palustris (strain BisA53) protein is DNA mismatch repair protein MutS.